A 245-amino-acid polypeptide reads, in one-letter code: Adenosine 5'-phosphosulfate reductase (245 aa).

The [4Fe-4S] cluster site is built by Cys124, Cys125, Cys205, and Cys208. Residue Cys231 is the Nucleophile; cysteine thiosulfonate intermediate of the active site.

It belongs to the PAPS reductase family. CysH subfamily. It depends on [4Fe-4S] cluster as a cofactor.

Its subcellular location is the cytoplasm. The catalysed reaction is [thioredoxin]-disulfide + sulfite + AMP + 2 H(+) = adenosine 5'-phosphosulfate + [thioredoxin]-dithiol. Its pathway is sulfur metabolism; hydrogen sulfide biosynthesis; sulfite from sulfate. Functionally, catalyzes the formation of sulfite from adenosine 5'-phosphosulfate (APS) using thioredoxin as an electron donor. The protein is Adenosine 5'-phosphosulfate reductase of Chelativorans sp. (strain BNC1).